A 681-amino-acid chain; its full sequence is Replication protein E1 (681 aa).

Residues 88-90 carry the Nuclear localization signal motif; sequence KRK. S94, S98, and S111 each carry phosphoserine; by host. The Nuclear export signal signature appears at 110-119; that stretch reads LSPRLDAIKL. Residues 124–221 form a disordered region; the sequence is AKAKRRLFEL…SDLQSTSTGK (98 aa). Composition is skewed to polar residues over residues 138 to 158 and 170 to 184; these read YGQT…SSET and VVQS…NGRQ. A compositionally biased stretch (basic and acidic residues) spans 185–207; sequence NNDEGSGRNVGEHGSQEEERAGG. The tract at residues 218-384 is DNA-binding region; that stretch reads STGKGAGGVV…QTMVGHAMED (167 aa). The 151-residue stretch at 483–633 folds into the SF3 helicase domain; sequence VEFIPFLCAF…FPVTTQGEPM (151 aa). 509–516 provides a ligand contact to ATP; sequence GPADTGKS. A Glycyl lysine isopeptide (Lys-Gly) (interchain with G-Cter in SUMO) cross-link involves residue K590. Residues 657–681 are disordered; that stretch reads PEDEEEHGNPSEPFRCVPGQNARTI.

Belongs to the papillomaviridae E1 protein family. Can form hexamers. Interacts with E2 protein; this interaction increases E1 DNA binding specificity. Interacts with host DNA polymerase subunit POLA2. Interacts with host single stranded DNA-binding protein RPA1. Interacts with host TOP1; this interaction stimulates the enzymatic activity of TOP1. Post-translationally, phosphorylated. In terms of processing, sumoylated.

It localises to the host nucleus. It carries out the reaction Couples ATP hydrolysis with the unwinding of duplex DNA by translocating in the 3'-5' direction.. The catalysed reaction is ATP + H2O = ADP + phosphate + H(+). In terms of biological role, ATP-dependent DNA 3'-5' helicase required for initiation of viral DNA replication. It forms a complex with the viral E2 protein. The E1-E2 complex binds to the replication origin which contains binding sites for both proteins. During the initial step, a dimer of E1 interacts with a dimer of protein E2 leading to a complex that binds the viral origin of replication with high specificity. Then, a second dimer of E1 displaces the E2 dimer in an ATP-dependent manner to form the E1 tetramer. Following this, two E1 monomers are added to each half of the site, which results in the formation of two E1 trimers on the viral ori. Subsequently, two hexamers will be created. The double hexamer acts as a bi-directional helicase machinery and unwinds the viral DNA and then recruits the host DNA polymerase to start replication. This chain is Replication protein E1, found in Homo sapiens (Human).